We begin with the raw amino-acid sequence, 399 residues long: Proteinase-activated receptor 2 (399 aa).

Positions methionine 1–threonine 25 are cleaved as a signal peptide. Positions glutamate 26–arginine 38 are cleaved as a propeptide — removed for receptor activation. N-linked (GlcNAc...) asparagine glycosylation is present at asparagine 33. Over serine 39 to glycine 73 the chain is Extracellular. A helical membrane pass occupies residues lysine 74 to leucine 103. Residues phenylalanine 104–histidine 110 lie on the Cytoplasmic side of the membrane. Residues proline 111–histidine 139 traverse the membrane as a helical segment. Topologically, residues glycine 140–lysine 151 are extracellular. Cysteine 150 and cysteine 228 form a disulfide bridge. A helical transmembrane segment spans residues valine 152–isoleucine 179. Topologically, residues valine 180 to histidine 185 are cytoplasmic. A helical transmembrane segment spans residues proline 186–valine 213. The Extracellular portion of the chain corresponds to methionine 214 to leucine 237. Asparagine 224 carries N-linked (GlcNAc...) asparagine glycosylation. The chain crosses the membrane as a helical span at residues valine 238–leucine 271. Residues arginine 272–histidine 279 are Cytoplasmic-facing. Residues serine 280–glutamine 319 form a helical membrane-spanning segment. Residues arginine 320–tyrosine 325 lie on the Extracellular side of the membrane. The helical transmembrane segment at alanine 326–valine 349 threads the bilayer. At serine 350–tyrosine 399 the chain is on the cytoplasmic side. A lipid anchor (S-palmitoyl cysteine) is attached at cysteine 363.

Belongs to the G-protein coupled receptor 1 family. As to quaternary structure, interacts with TLR4, COPS5 and TMED2. Interacts with GNAQ, GNA11, GNA12, GNA13 and GNA14. In terms of processing, a proteolytic cleavage generates a new N-terminus that functions as a tethered ligand. Activating serine proteases include trypsin, mast cell tryptase, coagulation factors VII and Xa, myeloblastin/PRTN3 and membrane-type serine protease 1/ST14. Proposed subsequent cleavage by serine proteases is leading to receptor deactivation and include neutrophil elastase and cathepsin G. At least in part, implicated proteases are also shown to activate the receptor; the glycosylation status of the receptor is thought to contribute to the difference. N-glycosylated and sialylated. Post-translationally, multiple phosphorylated on serine and threonine residues in the cytoplasmic region upon receptor activation; required for receptor desensitization and recruitment of beta-arrestin. In terms of processing, monoubiquitinated by Cbl at the plasma membrane and in early endosomes; not required for receptor endocytosis but for translocation to late endosomes or lysosomes. Deubiquitination involves Stambp and Usp8; required for lysosomal trafficking and receptor degradation.

It localises to the cell membrane. In terms of biological role, receptor for trypsin and trypsin-like enzymes coupled to G proteins. Its function is mediated through the activation of several signaling pathways including phospholipase C (PLC), intracellular calcium, mitogen-activated protein kinase (MAPK), I-kappaB kinase/NF-kappaB and Rho. Can also be transactivated by cleaved F2r/Par1. Involved in modulation of inflammatory responses and regulation of innate and adaptive immunity, and acts as a sensor for proteolytic enzymes generated during infection. Generally is promoting inflammation. Can signal synergistically with Tlr4 and probably Tlr2 in inflammatory responses and modulates Tlr3 signaling. Has a protective role in establishing the endothelial barrier; the activity involves coagulation factor X. Regulates endothelial cell barrier integrity during neutrophil extravasation, probably following proteolytic cleavage by PRTN3. Proposed to have a bronchoprotective role in airway epithelium, but also shown to compromise the airway epithelial barrier by interrupting E-cadherin adhesion. Involved in the regulation of vascular tone; activation results in hypotension presumably mediated by vasodilation. Associates with a subset of G proteins alpha subunits such as GNAQ, GNA11, GNA14, GNA12 and GNA13, but probably not with G(o)-alpha, G(i) subunit alpha-1 and G(i) subunit alpha-2. Believed to be a class B receptor which internalizes as a complex with arrestin and traffic with it to endosomal vesicles, presumably as desensitized receptor, for extended periods of time. Mediates inhibition of TNF-alpha stimulated JNK phosphorylation via coupling to GNAQ and GNA11; the function involves dissociation of Ripk1 and Tradd from Tnfr1. Mediates phosphorylation of nuclear factor NF-kappa-B RELA subunit at 'Ser-536'; the function involves Ikbkb and is predominantly independent of G proteins. Involved in cellular migration. Involved in cytoskeletal rearrangement and chemotaxis through beta-arrestin-promoted scaffolds; the function is independent of GNAQ and GNA11 and involves promotion of cofilin dephosphorylation and actin filament severing. Induces redistribution of Cops5 from the plasma membrane to the cytosol and activation of the JNK cascade is mediated by Cops5. Involved in the recruitment of leukocytes to the sites of inflammation and is the major PAR receptor capable of modulating eosinophil function such as pro-inflammatory cytokine secretion, superoxide production and degranulation. During inflammation promotes dendritic cell maturation, trafficking to the lymph nodes and subsequent T-cell activation. Involved in antimicrobial response of innate immune cells; activation enhances phagocytosis of Gram-positive and killing of Gram-negative bacteria. Acts synergistically with interferon-gamma in enhancing antiviral responses. Mediates activation of pro-inflammatory and pro-fibrotic responses in fibroblasts, triggered by coagulation factor Xa (F10). Probably mediates activation of barrier protective signaling responses in endothelial cells, triggered by coagulation factor Xa (F10). This chain is Proteinase-activated receptor 2 (F2rl1), found in Mus musculus (Mouse).